A 1215-amino-acid polypeptide reads, in one-letter code: DNA-directed RNA polymerase subunit beta' (1215 aa).

Zn(2+)-binding residues include cysteine 60, cysteine 62, cysteine 75, and cysteine 78. Positions 450, 452, and 454 each coordinate Mg(2+). Residues cysteine 818, cysteine 892, cysteine 899, and cysteine 902 each contribute to the Zn(2+) site.

The protein belongs to the RNA polymerase beta' chain family. As to quaternary structure, the RNAP catalytic core consists of 2 alpha, 1 beta, 1 beta' and 1 omega subunit. When a sigma factor is associated with the core the holoenzyme is formed, which can initiate transcription. Mg(2+) is required as a cofactor. Requires Zn(2+) as cofactor.

The catalysed reaction is RNA(n) + a ribonucleoside 5'-triphosphate = RNA(n+1) + diphosphate. DNA-dependent RNA polymerase catalyzes the transcription of DNA into RNA using the four ribonucleoside triphosphates as substrates. The protein is DNA-directed RNA polymerase subunit beta' of Streptococcus sanguinis (strain SK36).